The sequence spans 488 residues: Germacrene A hydroxylase (488 aa).

Over 1-6 (MELSFT) the chain is Cytoplasmic. The helical; Signal-anchor for type II membrane protein transmembrane segment at 7–23 (TSIAVATIVFVLFKLAT) threads the bilayer. The Lumenal segment spans residues 24 to 488 (RPKSNKKLLP…KTHLVLVPSF (465 aa)). Residues asparagine 255, asparagine 260, and asparagine 379 are each glycosylated (N-linked (GlcNAc...) asparagine). Cysteine 432 serves as a coordination point for heme.

This sequence belongs to the cytochrome P450 family. It depends on heme as a cofactor.

The protein localises to the endoplasmic reticulum membrane. It catalyses the reaction (+)-(R)-germacrene A + 3 reduced [NADPH--hemoprotein reductase] + 3 O2 = germacra-1(10),4,11(13)-trien-12-oate + 3 oxidized [NADPH--hemoprotein reductase] + 4 H2O + 4 H(+). Its pathway is secondary metabolite biosynthesis; terpenoid biosynthesis. Functionally, involved in the biosynthesis of germacrene-derived sesquiterpene lactones. Catalyzes three consecutive oxidations of germacrene A to produce germacrene A acid. Could also catalyze the three-step oxidation of non-natural substrate amorphadiene to artemisinic acid. This is Germacrene A hydroxylase from Saussurea costus (Costus).